Here is a 575-residue protein sequence, read N- to C-terminus: MKKEEWILPYIKQNARLFVLVIFLGAVTIFSAAFLMFTSGFLISKAATRPENILLIYVPIVAVRTFGIARSVSRYVERLVGHHIILKIVSDMRVRLYNMLEPGALMLRSRFRTGDMLGILSEDIEHLQDAFLKTIFPAISALLLYAVSVIALGFFSWPFAILLALYLFVLVVLFPVVSLLVTRAKNAKLKSGRNVLYSRLTDAVMGVSDWMFSGRRHAFIDAYEKEERDWFELERKKQRFTRWRDFAAQCLVAGLILLMLFWTAGQQADGELAKTMIAAFVLVVFPLTEAFLPLSDALGEVPGYQDSIRRMNNVAPQPEASQTESGDQILDLQDVTLAFRDVTFSYDNSSQVLHNFSFTLRQGEKMALLGRSGSGKSTSLALIEGALKPDSGSVTLNGVETALLKDQIADAVAVLNQKPHLFDTSILNNIRLGNGEASDEDVRRAAKQVKLHDYIESLPDGYHTSVQETGIRFSGGERQRIALARILLQDTPIIILDEPTVGLDPITERELMETVFEVLKGKTILWITHHLAGVEAADKIVFLENGKTEMEGTHEELLAANERYRRLYHLDVPVK.

A run of 6 helical transmembrane segments spans residues 17–37 (LFVL…FLMF), 53–73 (ILLI…RSVS), 135–155 (IFPA…LGFF), 161–181 (ILLA…SLLV), 246–266 (FAAQ…TAGQ), and 275–295 (TMIA…LPLS). Positions 19-303 (VLVIFLGAVT…LSDALGEVPG (285 aa)) constitute an ABC transmembrane type-1 domain. The ABC transporter domain maps to 337–570 (LAFRDVTFSY…NERYRRLYHL (234 aa)). Position 370–377 (370–377 (GRSGSGKS)) interacts with ATP.

This sequence belongs to the ABC transporter superfamily. Cysteine exporter (TC 3.A.1.129.1) family. Forms a heterodimer with CydC.

It is found in the cell membrane. The catalysed reaction is L-cysteine(in) + ATP + H2O = L-cysteine(out) + ADP + phosphate + H(+). It carries out the reaction glutathione(in) + ATP + H2O = glutathione(out) + ADP + phosphate + H(+). Functionally, part of the ABC transporter complex CydDC that exports the reduced low-molecular-weight thiols cysteine and glutathione from the cell. Export of these thiol-containing redox-active molecules may be crucial for redox homeostasis, permitting correct assembly of various respiratory complexes and formation of correct disulfide bonds in secreted proteins. CydD contains transmembrane domains (TMD), which form a pore in the membrane, and an ATP-binding domain (NBD), which is responsible for energy generation. In Bacillus subtilis (strain 168), this protein is Glutathione/L-cysteine transport system ATP-binding/permease protein CydD (cydD).